A 1016-amino-acid polypeptide reads, in one-letter code: Protein TIC110, chloroplastic (1016 aa).

The transit peptide at 1 to 51 (MNPSLVTAINAPISPSPRSPLLSHFLPTLPHRFSKSECLSRRRYRVSFPRS) directs the protein to the chloroplast. At S52 the chain carries N-acetylserine. The Stromal portion of the chain corresponds to 52–95 (SAASSDQLSVSTQAKNPGIHGNKKELTGLQPIVEKMTPPVRLAT). The helical transmembrane segment at 96–116 (SAVVLAASLATGYGLGLRLAG) threads the bilayer. Over 117–118 (SR) the chain is Chloroplast intermembrane. The helical transmembrane segment at 119 to 139 (NIAFGGAAVAGAAGGAVVYAL) threads the bilayer. Over 140 to 259 (NSAVPEVAAI…EREGDAEQRR (120 aa)) the chain is Stromal. The helical transmembrane segment at 260–280 (AFMRLVYVSALVFGDASSFLL) threads the bilayer. Residues 281-368 (PWKRVLKVTD…SILKSRTRAA (88 aa)) are Chloroplast intermembrane-facing. Residues 369–386 (KSLASVVEELEKVLEFNN) traverse the membrane as a helical segment. At 387–632 (LLVSLKSHSE…RAAENRTDSA (246 aa)) the chain is on the stromal side. Residues 633–650 (KELKKMIAFNTLVVTEMV) traverse the membrane as a helical segment. At 651-719 (ADIKGESSDK…DDLPDRDRID (69 aa)) the chain is on the chloroplast intermembrane side. Positions 654-669 (KGESSDKAPEEDPVQE) are enriched in basic and acidic residues. Positions 654 to 708 (KGESSDKAPEEDPVQEKEEDDEDEEWGSLESLRKTRPDKELAEKMGKPGQTEITL) are disordered. Residues 670 to 680 (KEEDDEDEEWG) show a composition bias toward acidic residues. The span at 684 to 699 (SLRKTRPDKELAEKMG) shows a compositional bias: basic and acidic residues. A helical transmembrane segment spans residues 720-736 (LYKTYLLYCVTGEVTRI). The Stromal segment spans residues 737–1016 (PFGAQITTKR…SAAEEGNFVF (280 aa)).

Belongs to the chloroplast envelope anion channel-forming Tic110 (TC 1.A.18) family. Part of the Tic complex. Interacts with HSP70, HSP93 and TIC40. Interacts with the Toc complex components TOC33, TOC75 and TOC159. Interacts with LTD. As to expression, expressed in seedlings, flowers, leaves, stems and roots.

The protein localises to the plastid. It localises to the chloroplast inner membrane. In terms of biological role, involved in protein precursor import into chloroplasts. Forms a voltage-dependent cation-selective channel at the inner envelope of chloroplasts, which specifically responds to a transit peptide. Associates with both the precursor and mature forms of the preprotein. This Arabidopsis thaliana (Mouse-ear cress) protein is Protein TIC110, chloroplastic (TIC110).